We begin with the raw amino-acid sequence, 347 residues long: Protein RecA (347 aa).

68–75 (GPESSGKT) is an ATP binding site.

This sequence belongs to the RecA family.

It localises to the cytoplasm. Can catalyze the hydrolysis of ATP in the presence of single-stranded DNA, the ATP-dependent uptake of single-stranded DNA by duplex DNA, and the ATP-dependent hybridization of homologous single-stranded DNAs. It interacts with LexA causing its activation and leading to its autocatalytic cleavage. The protein is Protein RecA of Nocardia farcinica (strain IFM 10152).